The sequence spans 146 residues: Hemoglobin subunit beta (146 aa).

Residues 2-146 enclose the Globin domain; that stretch reads HWTAEEKSAI…VAHALAHQYH (145 aa). Residues His63 and His92 each coordinate heme b.

The protein belongs to the globin family. As to quaternary structure, heterotetramer of two alpha chains and two beta chains. Oxygenation results in dissociation to dimers. As to expression, red blood cells.

Functionally, involved in oxygen transport from the lung to the various peripheral tissues. The protein is Hemoglobin subunit beta (HBB) of Erythrolamprus miliaris (South American water snake).